The following is a 362-amino-acid chain: Spermidine/putrescine import ATP-binding protein PotA (362 aa).

Residues 6–236 (VELKHVGKRY…PVNHFVADFI (231 aa)) enclose the ABC transporter domain. Residue 38–45 (GPSGSGKT) participates in ATP binding.

Belongs to the ABC transporter superfamily. Spermidine/putrescine importer (TC 3.A.1.11.1) family. In terms of assembly, the complex is composed of two ATP-binding proteins (PotA), two transmembrane proteins (PotB and PotC) and a solute-binding protein (PotD).

It localises to the cell membrane. It catalyses the reaction ATP + H2O + polyamine-[polyamine-binding protein]Side 1 = ADP + phosphate + polyamineSide 2 + [polyamine-binding protein]Side 1.. Functionally, part of the ABC transporter complex PotABCD involved in spermidine/putrescine import. Responsible for energy coupling to the transport system. In Lacticaseibacillus paracasei (strain ATCC 334 / BCRC 17002 / CCUG 31169 / CIP 107868 / KCTC 3260 / NRRL B-441) (Lactobacillus paracasei), this protein is Spermidine/putrescine import ATP-binding protein PotA.